The primary structure comprises 211 residues: Methylthioribulose-1-phosphate dehydratase (211 aa).

2 residues coordinate Zn(2+): His94 and His96.

It belongs to the aldolase class II family. MtnB subfamily. The cofactor is Zn(2+).

It carries out the reaction 5-(methylsulfanyl)-D-ribulose 1-phosphate = 5-methylsulfanyl-2,3-dioxopentyl phosphate + H2O. Its pathway is amino-acid biosynthesis; L-methionine biosynthesis via salvage pathway; L-methionine from S-methyl-5-thio-alpha-D-ribose 1-phosphate: step 2/6. In terms of biological role, catalyzes the dehydration of methylthioribulose-1-phosphate (MTRu-1-P) into 2,3-diketo-5-methylthiopentyl-1-phosphate (DK-MTP-1-P). This is Methylthioribulose-1-phosphate dehydratase from Pseudoalteromonas translucida (strain TAC 125).